The following is a 335-amino-acid chain: NADH-quinone oxidoreductase subunit H (335 aa).

The next 8 membrane-spanning stretches (helical) occupy residues 11–31, 81–101, 114–134, 154–174, 187–207, 238–258, 270–290, and 307–327; these read VILTVLRAIVVLLAVVVCGAL, VIFTLAPVVAMSALLIAFVVI, IGLLFFFAMAGLSVYAVLFAG, VSYEVFLGLALMGVVVQVGSF, LWFIIPQFFGFCTFFIAGVAV, FFVGEYIGIILISALLVTLFF, QLSFLWFALKTAFFIMLFILL, and WKFCLPLTLINLLVTAAIVLY.

This sequence belongs to the complex I subunit 1 family. As to quaternary structure, NDH-1 is composed of 13 different subunits. Subunits NuoA, H, J, K, L, M, N constitute the membrane sector of the complex.

It is found in the cell inner membrane. The enzyme catalyses a quinone + NADH + 5 H(+)(in) = a quinol + NAD(+) + 4 H(+)(out). NDH-1 shuttles electrons from NADH, via FMN and iron-sulfur (Fe-S) centers, to quinones in the respiratory chain. The immediate electron acceptor for the enzyme in this species is believed to be ubiquinone. Couples the redox reaction to proton translocation (for every two electrons transferred, four hydrogen ions are translocated across the cytoplasmic membrane), and thus conserves the redox energy in a proton gradient. This subunit may bind ubiquinone. In Pseudomonas putida (strain ATCC 700007 / DSM 6899 / JCM 31910 / BCRC 17059 / LMG 24140 / F1), this protein is NADH-quinone oxidoreductase subunit H.